A 113-amino-acid polypeptide reads, in one-letter code: Large ribosomal subunit protein bL19 (113 aa).

Belongs to the bacterial ribosomal protein bL19 family.

Its function is as follows. This protein is located at the 30S-50S ribosomal subunit interface and may play a role in the structure and function of the aminoacyl-tRNA binding site. The chain is Large ribosomal subunit protein bL19 from Carboxydothermus hydrogenoformans (strain ATCC BAA-161 / DSM 6008 / Z-2901).